The following is an 85-amino-acid chain: Putative membrane protein insertion efficiency factor (85 aa).

This sequence belongs to the UPF0161 family.

It is found in the cell membrane. Could be involved in insertion of integral membrane proteins into the membrane. Functionally, lyses fish blood cells. The chain is Putative membrane protein insertion efficiency factor (hlyA) from Aeromonas hydrophila.